Reading from the N-terminus, the 352-residue chain is Secretion system apparatus protein SsaU (352 aa).

4 consecutive transmembrane segments (helical) span residues 34-54 (LIAL…ILIE), 89-109 (LGAG…GVVI), 144-164 (LKVI…ASTF), and 176-196 (VLVV…FYIV).

The protein belongs to the type III secretion exporter family.

It is found in the cell membrane. Functionally, part of a type III secretion system. The sequence is that of Secretion system apparatus protein SsaU (ssaU) from Salmonella typhimurium (strain LT2 / SGSC1412 / ATCC 700720).